The primary structure comprises 966 residues: Integrator complex subunit 7 (966 aa).

2 positions are modified to phosphoserine: S338 and S809. The tract at residues 941 to 966 is disordered; the sequence is LQQQAQQPLQPQPLPQPQPRSAYTRF.

Belongs to the Integrator subunit 7 family. Component of the Integrator complex, composed of core subunits INTS1, INTS2, INTS3, INTS4, INTS5, INTS6, INTS7, INTS8, INTS9/RC74, INTS10, INTS11/CPSF3L, INTS12, INTS13, INTS14 and INTS15. The core complex associates with protein phosphatase 2A subunits PPP2CA and PPP2R1A, to form the Integrator-PP2A (INTAC) complex. Interacts with NABP2.

The protein localises to the nucleus. It is found in the chromosome. The protein resides in the cytoplasm. Its function is as follows. Component of the integrator complex, a multiprotein complex that terminates RNA polymerase II (Pol II) transcription in the promoter-proximal region of genes. The integrator complex provides a quality checkpoint during transcription elongation by driving premature transcription termination of transcripts that are unfavorably configured for transcriptional elongation: the complex terminates transcription by (1) catalyzing dephosphorylation of the C-terminal domain (CTD) of Pol II subunit POLR2A/RPB1 and SUPT5H/SPT5, (2) degrading the exiting nascent RNA transcript via endonuclease activity and (3) promoting the release of Pol II from bound DNA. The integrator complex is also involved in terminating the synthesis of non-coding Pol II transcripts, such as enhancer RNAs (eRNAs), small nuclear RNAs (snRNAs), telomerase RNAs and long non-coding RNAs (lncRNAs). May be not involved in the recruitment of cytoplasmic dynein to the nuclear envelope by different components of the INT complex. Plays a role in DNA damage response (DDR) signaling during the S phase. The chain is Integrator complex subunit 7 (Ints7) from Mus musculus (Mouse).